The sequence spans 444 residues: MKSQSKRTSRLFVFVGGVVAIIIAVLSWRYFGTGSDNNTSGAQQSARGQDTSHGGRRNTPLAPVQAATATEQEVPRYLTGLGTVIAANTVTVTSRVDGELMALHFTEGQQVKAGDLLAEIDPRPYEVQLTQAQGQLAKDQATLDNARRDLARYQKLSKTGLISQQELDTQSSLVRQSEGSVKADQGAIDSAKLQLTYSRITAPISGRVGLKQVDVGNYITSGTATPIVVITQTHPVDVVFTLPESDIPAIIQAQKNAEKTHAIVPVEAWDRTNKQMLAQGYLLSIDNQIDTTTGTIKLKARFNNEDDVLFPNQFVNARIKVDLLQNAVVVPTAAVQMGSEGNFVWTLDDANKVSKHLVTTGIQNSQQVVIDAGLNAGQRVVTDGIDRLTEGVQVEVVTPRSANTDANPASAEKAAAEAEGSTPHQGRGRPANAPARSTTAAEKS.

The N-terminal stretch at 1 to 20 is a signal peptide; that stretch reads MKSQSKRTSRLFVFVGGVVA. A compositionally biased stretch (polar residues) spans 37–52; the sequence is NNTSGAQQSARGQDTS. 2 disordered regions span residues 37 to 60 and 398 to 444; these read NNTS…RNTP and TPRS…AEKS. Over residues 406-419 the composition is skewed to low complexity; the sequence is ANPASAEKAAAEAE. Over residues 435 to 444 the composition is skewed to polar residues; the sequence is ARSTTAAEKS.

The protein belongs to the membrane fusion protein (MFP) (TC 8.A.1) family. As to quaternary structure, part of a tripartite efflux system composed of MdtA, MdtB and MdtC.

The protein resides in the cell inner membrane. In Yersinia pseudotuberculosis serotype O:1b (strain IP 31758), this protein is Multidrug resistance protein MdtA.